We begin with the raw amino-acid sequence, 358 residues long: E3 ubiquitin-protein ligase RFI2 (358 aa).

The tract at residues 1-34 (MAGAKDSGCDDDLRIAGGCDPGKRGNPEDSSSPV) is disordered. An RING-type; atypical zinc finger spans residues 38–83 (CSICLESVLDDGTRSKAKLQCGHQFHLDCIGSAFNMKGAMQCPNCR). 2 disordered regions span residues 174–201 (GPAATPRTSDNNSTDDHPWNSHSNDHFH) and 248–313 (SNQR…DQNV). Over residues 187 to 201 (TDDHPWNSHSNDHFH) the composition is skewed to basic and acidic residues. Residues 248–266 (SNQRSSPAINSYQGSSTQM) are compositionally biased toward polar residues. Over residues 299 to 309 (LPPPPPPPPMP) the composition is skewed to pro residues.

It is found in the nucleus. It carries out the reaction S-ubiquitinyl-[E2 ubiquitin-conjugating enzyme]-L-cysteine + [acceptor protein]-L-lysine = [E2 ubiquitin-conjugating enzyme]-L-cysteine + N(6)-ubiquitinyl-[acceptor protein]-L-lysine.. It participates in protein modification; protein ubiquitination. Functionally, mediates phytochrome (phyA and phyB)-controlled seedling deetiolation responses such as hypocotyl elongation in response to red and far-red light. Required for light-induced expression of LHCB3 and CHALCONE SYNTHASE (CHS). Negatively regulates CONSTANS (CO) and FLOWERING LOCUS T (FT) expression and photoperiodic flowering. This is E3 ubiquitin-protein ligase RFI2 from Arabidopsis thaliana (Mouse-ear cress).